The following is a 274-amino-acid chain: Dermonecrotic toxin LarSicTox-alphaIB2bii (274 aa).

The active site involves His-3. Glu-23 and Asp-25 together coordinate Mg(2+). Catalysis depends on His-39, which acts as the Nucleophile. Intrachain disulfides connect Cys-43-Cys-49 and Cys-45-Cys-188. Asp-83 is a Mg(2+) binding site. N-linked (GlcNAc...) asparagine glycosylation occurs at Asn-251.

The protein belongs to the arthropod phospholipase D family. Class II subfamily. It depends on Mg(2+) as a cofactor. Expressed by the venom gland.

It is found in the secreted. It catalyses the reaction an N-(acyl)-sphingosylphosphocholine = an N-(acyl)-sphingosyl-1,3-cyclic phosphate + choline. The enzyme catalyses an N-(acyl)-sphingosylphosphoethanolamine = an N-(acyl)-sphingosyl-1,3-cyclic phosphate + ethanolamine. It carries out the reaction a 1-acyl-sn-glycero-3-phosphocholine = a 1-acyl-sn-glycero-2,3-cyclic phosphate + choline. The catalysed reaction is a 1-acyl-sn-glycero-3-phosphoethanolamine = a 1-acyl-sn-glycero-2,3-cyclic phosphate + ethanolamine. Its function is as follows. Dermonecrotic toxins cleave the phosphodiester linkage between the phosphate and headgroup of certain phospholipids (sphingolipid and lysolipid substrates), forming an alcohol (often choline) and a cyclic phosphate. This toxin acts on sphingomyelin (SM). It may also act on ceramide phosphoethanolamine (CPE), lysophosphatidylcholine (LPC) and lysophosphatidylethanolamine (LPE), but not on lysophosphatidylserine (LPS), and lysophosphatidylglycerol (LPG). It acts by transphosphatidylation, releasing exclusively cyclic phosphate products as second products. Induces dermonecrosis, hemolysis, increased vascular permeability, edema, inflammatory response, and platelet aggregation. The sequence is that of Dermonecrotic toxin LarSicTox-alphaIB2bii from Loxosceles arizonica (Arizona brown spider).